Consider the following 249-residue polypeptide: tRNA pseudouridine synthase A (249 aa).

Residue Asp-53 is the Nucleophile of the active site. Substrate is bound at residue Tyr-111.

This sequence belongs to the tRNA pseudouridine synthase TruA family. As to quaternary structure, homodimer.

It carries out the reaction uridine(38/39/40) in tRNA = pseudouridine(38/39/40) in tRNA. Formation of pseudouridine at positions 38, 39 and 40 in the anticodon stem and loop of transfer RNAs. The polypeptide is tRNA pseudouridine synthase A (Streptococcus pneumoniae serotype 19F (strain G54)).